The chain runs to 83 residues: RNA-binding protein Hfq (83 aa).

Residues 11–71 (DTFLNHVRKN…ISTIMPGHPV (61 aa)) form the Sm domain.

It belongs to the Hfq family. Homohexamer.

In terms of biological role, RNA chaperone that binds small regulatory RNA (sRNAs) and mRNAs to facilitate mRNA translational regulation in response to envelope stress, environmental stress and changes in metabolite concentrations. Also binds with high specificity to tRNAs. The polypeptide is RNA-binding protein Hfq (Methylobacterium radiotolerans (strain ATCC 27329 / DSM 1819 / JCM 2831 / NBRC 15690 / NCIMB 10815 / 0-1)).